The sequence spans 338 residues: tRNA N6-adenosine threonylcarbamoyltransferase (338 aa).

The Fe cation site is built by His112 and His116. Substrate is bound by residues 135–139 (LVSGG), Asp168, Gly181, and Asn273. Asp301 contributes to the Fe cation binding site.

It belongs to the KAE1 / TsaD family. It depends on Fe(2+) as a cofactor.

The protein resides in the cytoplasm. The catalysed reaction is L-threonylcarbamoyladenylate + adenosine(37) in tRNA = N(6)-L-threonylcarbamoyladenosine(37) in tRNA + AMP + H(+). In terms of biological role, required for the formation of a threonylcarbamoyl group on adenosine at position 37 (t(6)A37) in tRNAs that read codons beginning with adenine. Is involved in the transfer of the threonylcarbamoyl moiety of threonylcarbamoyl-AMP (TC-AMP) to the N6 group of A37, together with TsaE and TsaB. TsaD likely plays a direct catalytic role in this reaction. The protein is tRNA N6-adenosine threonylcarbamoyltransferase of Buchnera aphidicola subsp. Baizongia pistaciae (strain Bp).